Consider the following 66-residue polypeptide: DNA gyrase inhibitor YacG (66 aa).

The Zn(2+) site is built by Cys-9, Cys-12, Cys-28, and Cys-32. Residues His-45–His-66 are disordered.

The protein belongs to the DNA gyrase inhibitor YacG family. As to quaternary structure, interacts with GyrB. Zn(2+) is required as a cofactor.

In terms of biological role, inhibits all the catalytic activities of DNA gyrase by preventing its interaction with DNA. Acts by binding directly to the C-terminal domain of GyrB, which probably disrupts DNA binding by the gyrase. The sequence is that of DNA gyrase inhibitor YacG from Pseudomonas entomophila (strain L48).